Here is a 180-residue protein sequence, read N- to C-terminus: Translation initiation factor IF-3 (180 aa).

It belongs to the IF-3 family. In terms of assembly, monomer.

Its subcellular location is the cytoplasm. In terms of biological role, IF-3 binds to the 30S ribosomal subunit and shifts the equilibrium between 70S ribosomes and their 50S and 30S subunits in favor of the free subunits, thus enhancing the availability of 30S subunits on which protein synthesis initiation begins. The chain is Translation initiation factor IF-3 from Salmonella typhi.